A 114-amino-acid polypeptide reads, in one-letter code: Photosystem II reaction center Psb28 protein (114 aa).

Belongs to the Psb28 family. As to quaternary structure, part of the photosystem II complex.

Its subcellular location is the plastid. It localises to the chloroplast thylakoid membrane. The protein is Photosystem II reaction center Psb28 protein of Gracilaria tenuistipitata var. liui (Red alga).